A 667-amino-acid chain; its full sequence is MDILRVLSRGIKPNPKSKAQAGGATTQLPSAGALPRPQLFHDPVGSRGKKRKRRRGAQDDEPEGDDQELSDVDYFAPKKAAPEAAPTDVEESPKKRKIKLLDEDECRQILRSHRLKLTILSDQPQAEAKTEAEEPASKKKSSKKKKKETEGKDKKDKKDEHKKQIFPQPLTSFGELRHTYDVSPQLAANIAAQGFRVPTEVQMASLPLLLQPTTALKKSEGADIPNIDNGADFLAVAPTGSGKTITFLIPAIDGVLRRRAEEGRDTDQHVLEAVVVAPTRELATQIVNEGRKLAIGTGVRVVLMKRALKLDVEEVADEKSKDLEEGSGSEQGSGDEESEGEEESEGEEGKTSKEAKPLARVDILVTTPKILLNFLSGKAGARRLLPSVRSLILDEADVLLDPLFRKQTMAICRACTHPNVALTCWSATMASNVEALVTKHLLQARQEDRQPTPALHDELKYDIPLEAGGSARVAVLHSSMADSARSKIMARFRAGEVWVLVTTDVLARGVDFAGVNGVVNYDVPTSAAAYVHRAGRTGRAGREGGVAVTFYTKDDIPFVKSVANVIAASEKQAGVQADGGGGGTVQKWLLDALPKVAKEDKRKLKVRGVESRRTGGKATITTKSSWERRREHNRAQAVEASKRRKRQRREEGPAAGEAEGEWGGLED.

Disordered stretches follow at residues 1–99 (MDIL…RKIK) and 121–170 (SDQP…PQPL). The span at 59–71 (DDEPEGDDQELSD) shows a compositional bias: acidic residues. Residues 77-86 (PKKAAPEAAP) show a composition bias toward low complexity. Composition is skewed to basic and acidic residues over residues 128–137 (AKTEAEEPAS) and 147–163 (KETEGKDKKDKKDEHKK). The Q motif signature appears at 175–203 (ELRHTYDVSPQLAANIAAQGFRVPTEVQM). One can recognise a Helicase ATP-binding domain in the interval 224-447 (IPNIDNGADF…TKHLLQARQE (224 aa)). 237–244 (APTGSGKT) contributes to the ATP binding site. The segment at 318–355 (EKSKDLEEGSGSEQGSGDEESEGEEESEGEEGKTSKEA) is disordered. The segment covering 333–346 (SGDEESEGEEESEG) has biased composition (acidic residues). The DEAD box motif lies at 394-397 (DEAD). One can recognise a Helicase C-terminal domain in the interval 432–581 (NVEALVTKHL…QAGVQADGGG (150 aa)). The interval 608–667 (GVESRRTGGKATITTKSSWERRREHNRAQAVEASKRRKRQRREEGPAAGEAEGEWGGLED) is disordered. Basic and acidic residues predominate over residues 625–634 (SWERRREHNR). The span at 658 to 667 (AEGEWGGLED) shows a compositional bias: acidic residues.

The protein belongs to the DEAD box helicase family. DDX52/ROK1 subfamily. Interacts with the U3 snoRNA and is associated with the 90S and 40S pre-ribosomes.

Its subcellular location is the nucleus. The protein localises to the nucleolus. It carries out the reaction ATP + H2O = ADP + phosphate + H(+). Its function is as follows. ATP-dependent RNA helicase involved in 40S ribosomal subunit biogenesis. Required for the processing and cleavage of 35S pre-rRNA at sites A0, A1, and A2, leading to mature 18S rRNA. This is ATP-dependent RNA helicase ROK1 (ROK1) from Chaetomium globosum (strain ATCC 6205 / CBS 148.51 / DSM 1962 / NBRC 6347 / NRRL 1970) (Soil fungus).